Reading from the N-terminus, the 284-residue chain is Proteasome subunit beta (284 aa).

Residues 1–56 (MSPMESSSTRFPGQALPAAYLTPGSSSFTDFLRVAAPELMPGSRPVPDGAVEAPHG) constitute a propeptide, removed in mature form; by autocatalysis. Residue threonine 57 is the Nucleophile of the active site.

The protein belongs to the peptidase T1B family. In terms of assembly, the 20S proteasome core is composed of 14 alpha and 14 beta subunits that assemble into four stacked heptameric rings, resulting in a barrel-shaped structure. The two inner rings, each composed of seven catalytic beta subunits, are sandwiched by two outer rings, each composed of seven alpha subunits. The catalytic chamber with the active sites is on the inside of the barrel. Has a gated structure, the ends of the cylinder being occluded by the N-termini of the alpha-subunits. Is capped by the proteasome-associated ATPase, ARC.

Its subcellular location is the cytoplasm. It catalyses the reaction Cleavage of peptide bonds with very broad specificity.. The protein operates within protein degradation; proteasomal Pup-dependent pathway. With respect to regulation, the formation of the proteasomal ATPase ARC-20S proteasome complex, likely via the docking of the C-termini of ARC into the intersubunit pockets in the alpha-rings, may trigger opening of the gate for substrate entry. Interconversion between the open-gate and close-gate conformations leads to a dynamic regulation of the 20S proteasome proteolysis activity. In terms of biological role, component of the proteasome core, a large protease complex with broad specificity involved in protein degradation. This Saccharopolyspora erythraea (strain ATCC 11635 / DSM 40517 / JCM 4748 / NBRC 13426 / NCIMB 8594 / NRRL 2338) protein is Proteasome subunit beta.